We begin with the raw amino-acid sequence, 505 residues long: MATPSNKRSRDSESTEEPVVDEKSTSKQNNAAPEGEQTTCVEKFEELKLSQPTLKAIEKMGFTTMTSVQARTIPPLLAGRDVLGAAKTGSGKTLAFLIPAIELLHSLKFKPRNGTGIIVITPTRELALQIFGVARELMEFHSQTFGIVIGGANRRQEAEKLMKGVNMLIATPGRLLDHLQNTKGFVFKNLKALIIDEADRILEIGFEDEMRQIIKILPNEDRQSMLFSATQTTKVEDLARISLRPGPLFINVVPETDNSTADGLEQGYVVCDSDKRFLLLFSFLKRNQKKKIIVFLSSCNSVKYYAELLNYIDLPVLELHGKQKQQKRTNTFFEFCNAERGILICTDVAARGLDIPAVDWIIQFDPPDDPRDYIHRVGRTARGTKGKGKSLMFLTPNELGFLRYLKASKVPLNEYEFPENKIANVQSQLEKLIKSNYYLHQTAKDGYRSYLQAYASHSLKTVYQIDKLDLAKVAKSYGFPVPPKVNITIGASGKTPNTKRRKTHK.

The disordered stretch occupies residues Met-1–Gln-37. The residue at position 12 (Ser-12) is a Phosphoserine. Polar residues predominate over residues Ser-26 to Gln-37. Positions Glu-42–Ala-70 match the Q motif motif. Positions Ile-73–Phe-249 constitute a Helicase ATP-binding domain. Ala-86–Thr-93 serves as a coordination point for ATP. The DEAD box signature appears at Asp-196–Asp-199. The region spanning Gly-263–Ile-433 is the Helicase C-terminal domain. Positions Lys-275–Lys-291 match the Bipartite nuclear localization signal motif.

Belongs to the DEAD box helicase family. DDX18/HAS1 subfamily. Interacts with RRP1. Associates in the nucleolus with the 60S and pre-60S ribosomal subunits. It has also been isolated with the nuclear pore complex. In terms of processing, phosphorylated by CDK1.

The protein resides in the nucleus. It is found in the nucleolus. It catalyses the reaction ATP + H2O = ADP + phosphate + H(+). Functionally, ATP-dependent RNA helicase involved in 40S ribosomal subunit biogenesis. Required for the processing and cleavage of 35S pre-rRNA at sites A0, A1, and A2, leading to mature 18S rRNA. This is ATP-dependent RNA helicase HAS1 (HAS1) from Saccharomyces cerevisiae (strain ATCC 204508 / S288c) (Baker's yeast).